A 396-amino-acid chain; its full sequence is Lysophospholipid transporter LplT (396 aa).

The Periplasmic portion of the chain corresponds to 1 to 17 (MSESVHTNTSLWSKGMK). The helical transmembrane segment at 18–38 (AVIVAQFLSAFGDNALLFATL) threads the bilayer. At 39–52 (ALLKAQFYPEWSQP) the chain is on the cytoplasmic side. Residues 53 to 73 (ILQMVFVGAYILLAPFVGQVA) form a helical membrane-spanning segment. At 74–90 (DSFAKGRVMMFANGLKL) the chain is on the periplasmic side. The helical transmembrane segment at 91–111 (LGAASICFGINPFLGYTLVGV) threads the bilayer. Over 112-144 (GAAAYSPAKYGILGELTTGSKLVKANGLMEASA) the chain is Cytoplasmic. A helical transmembrane segment spans residues 145–165 (IAAILLGSVAGGVLADWHVLV). Residue Ala166 is a topological domain, periplasmic. A helical membrane pass occupies residues 167 to 187 (LAACALAYGGAVVANIYIPKL). At 188-225 (AARPGQSWNLINMTRSFLNACTSLWCNGETRFSLVGTS) the chain is on the cytoplasmic side. Residues 226-246 (LFWGAGVTLRFLLVLWVPVAL) form a helical membrane-spanning segment. The Periplasmic segment spans residues 247–255 (GITDNATPT). A helical transmembrane segment spans residues 256-276 (YLNAMVAIGIVVGAGAAAKLV). Residues 277–279 (TLE) lie on the Cytoplasmic side of the membrane. The helical transmembrane segment at 280-300 (TVSRCMPAGILIGVVVPIFSL) threads the bilayer. The Periplasmic portion of the chain corresponds to 301–303 (QHE). The helical transmembrane segment at 304–324 (LLPAYALLMLIGVLGGFFVVP) threads the bilayer. At 325–342 (LNALLQERGKKSVGAGNA) the chain is on the cytoplasmic side. The helical transmembrane segment at 343–363 (IAVQNLGENSAMLLMLGIYSL) threads the bilayer. The Periplasmic segment spans residues 364–365 (AV). Residues 366–386 (MVGIPVVPIGIGFGALFALAI) traverse the membrane as a helical segment. The Cytoplasmic segment spans residues 387-396 (TALWIWQRRH).

Belongs to the major facilitator superfamily. LplT (TC 2.A.1.42) family.

Its subcellular location is the cell inner membrane. Functionally, catalyzes the facilitated diffusion of 2-acyl-glycero-3-phosphoethanolamine (2-acyl-GPE) into the cell. The sequence is that of Lysophospholipid transporter LplT from Shigella flexneri.